The sequence spans 203 residues: Ribosomal RNA large subunit methyltransferase E (203 aa).

Glycine 59, tryptophan 61, aspartate 79, asparagine 95, and aspartate 118 together coordinate S-adenosyl-L-methionine. Lysine 158 serves as the catalytic Proton acceptor.

Belongs to the class I-like SAM-binding methyltransferase superfamily. RNA methyltransferase RlmE family.

The protein localises to the cytoplasm. It carries out the reaction uridine(2552) in 23S rRNA + S-adenosyl-L-methionine = 2'-O-methyluridine(2552) in 23S rRNA + S-adenosyl-L-homocysteine + H(+). Specifically methylates the uridine in position 2552 of 23S rRNA at the 2'-O position of the ribose in the fully assembled 50S ribosomal subunit. The sequence is that of Ribosomal RNA large subunit methyltransferase E from Wigglesworthia glossinidia brevipalpis.